The following is a 230-amino-acid chain: Dephospho-CoA kinase (230 aa).

The tract at residues 1–20 (MSKYAAIPSPYSHQPQAPDH) is disordered. The 200-residue stretch at 26–225 (VVGLTGGIGS…QDYLKLAQQL (200 aa)) folds into the DPCK domain. 34 to 39 (GSGKSA) is a binding site for ATP.

Belongs to the CoaE family.

Its subcellular location is the cytoplasm. It carries out the reaction 3'-dephospho-CoA + ATP = ADP + CoA + H(+). It participates in cofactor biosynthesis; coenzyme A biosynthesis; CoA from (R)-pantothenate: step 5/5. Its function is as follows. Catalyzes the phosphorylation of the 3'-hydroxyl group of dephosphocoenzyme A to form coenzyme A. This is Dephospho-CoA kinase from Psychrobacter arcticus (strain DSM 17307 / VKM B-2377 / 273-4).